The primary structure comprises 390 residues: Phosphopentomutase (390 aa).

Residues aspartate 9, aspartate 283, histidine 288, aspartate 324, histidine 325, and histidine 336 each contribute to the Mn(2+) site.

Belongs to the phosphopentomutase family. Requires Mn(2+) as cofactor.

Its subcellular location is the cytoplasm. It catalyses the reaction 2-deoxy-alpha-D-ribose 1-phosphate = 2-deoxy-D-ribose 5-phosphate. The catalysed reaction is alpha-D-ribose 1-phosphate = D-ribose 5-phosphate. Its pathway is carbohydrate degradation; 2-deoxy-D-ribose 1-phosphate degradation; D-glyceraldehyde 3-phosphate and acetaldehyde from 2-deoxy-alpha-D-ribose 1-phosphate: step 1/2. Functionally, isomerase that catalyzes the conversion of deoxy-ribose 1-phosphate (dRib-1-P) and ribose 1-phosphate (Rib-1-P) to deoxy-ribose 5-phosphate (dRib-5-P) and ribose 5-phosphate (Rib-5-P), respectively. This is Phosphopentomutase from Thermotoga maritima (strain ATCC 43589 / DSM 3109 / JCM 10099 / NBRC 100826 / MSB8).